The chain runs to 551 residues: Cytochrome P450 monooxygenase abl5 (551 aa).

N-linked (GlcNAc...) asparagine glycosylation is present at N24. A helical membrane pass occupies residues 37–57 (VVLNTLTAIVVVWICYRAVIY). N174, N218, N283, N307, and N441 each carry an N-linked (GlcNAc...) asparagine glycan. A heme-binding site is contributed by C495.

This sequence belongs to the cytochrome P450 family. The cofactor is heme.

The protein localises to the membrane. Cytochrome P450 monooxygenase; part of the gene cluster that mediates the biosynthesis of abscisic acid (ABA), a phytohormone that acts antagonistically toward salicylic acid (SA), jasmonic acid (JA) and ethylene (ETH) signaling, to impede plant defense responses. The first step of the pathway catalyzes the reaction from farnesyl diphosphate to alpha-ionylideneethane performed by the alpha-ionylideneethane synthase abl3 via a three-step reaction mechanism involving 2 neutral intermediates, beta-farnesene and allofarnesene. The cytochrome P450 monooxygenase abl1 might then be involved in the conversion of alpha-ionylideneethane to alpha-ionylideneacetic acid. Alpha-ionylideneacetic acid is further converted to abscisic acid in 2 steps involving the cytochrome P450 monooxygenase abl2 and the short-chain dehydrogenase/reductase abl4, via the intermediates 1'-deoxy-ABA or 1',4'-trans-diol-ABA, depending on the order of action of these 2 enzymes. Abl2 is responsible for the hydroxylation of carbon atom C-1' and abl4 might be involved in the oxidation of the C-4' carbon atom. The cytochrome monooxygenase abl5 seems not essential for the biosynthesis of ABA and its function remains to be identified. The sequence is that of Cytochrome P450 monooxygenase abl5 from Leptosphaeria maculans (strain JN3 / isolate v23.1.3 / race Av1-4-5-6-7-8) (Blackleg fungus).